A 327-amino-acid polypeptide reads, in one-letter code: Dolichyl-phosphate beta-glucosyltransferase (327 aa).

Residues 1 to 15 (MIDLFINIASFTIYG) are Lumenal-facing. Residues 16 to 36 (IPVIPLFIIVFVILSYYLLLL) traverse the membrane as a helical segment. Residues 37–327 (HDESPLWLEK…YLLGIWKIKS (291 aa)) lie on the Cytoplasmic side of the membrane.

It belongs to the glycosyltransferase 2 family.

The protein localises to the endoplasmic reticulum membrane. It catalyses the reaction a di-trans,poly-cis-dolichyl phosphate + UDP-alpha-D-glucose = a di-trans,poly-cis-dolichyl beta-D-glucosyl phosphate + UDP. It functions in the pathway protein modification; protein glycosylation. Its function is as follows. Endoplasmic reticulum membrane-bound UDP-glucose:dolichyl-phosphate glucosyltransferase involved in protein N-linked glycosylation. The protein is Dolichyl-phosphate beta-glucosyltransferase (alg5) of Dictyostelium discoideum (Social amoeba).